The sequence spans 561 residues: Arginine--tRNA ligase (561 aa).

Positions 129–139 (ANPTGPLHVGH) match the 'HIGH' region motif.

It belongs to the class-I aminoacyl-tRNA synthetase family. Monomer.

It localises to the cytoplasm. It catalyses the reaction tRNA(Arg) + L-arginine + ATP = L-arginyl-tRNA(Arg) + AMP + diphosphate. The chain is Arginine--tRNA ligase from Bordetella bronchiseptica (strain ATCC BAA-588 / NCTC 13252 / RB50) (Alcaligenes bronchisepticus).